The sequence spans 299 residues: dTDP-4-dehydrorhamnose reductase (299 aa).

NADH-binding positions include Gly10–Val12, Asp30, Asp39–Phe40, and Ala63–Thr65. Gln11–Val12 provides a ligand contact to NADPH. NADPH-binding positions include Asp39–Phe40, Ala63–Thr65, and Tyr102. Thr104 to Asp105 provides a ligand contact to dTDP-beta-L-rhamnose. Positions 128 and 132 each coordinate NADH. 2 residues coordinate NADPH: Tyr128 and Lys132. The active-site Proton donor/acceptor is the Tyr128. Trp153 contributes to the dTDP-beta-L-rhamnose binding site.

The protein belongs to the dTDP-4-dehydrorhamnose reductase family. Homodimer. It depends on Mg(2+) as a cofactor.

The enzyme catalyses dTDP-beta-L-rhamnose + NADP(+) = dTDP-4-dehydro-beta-L-rhamnose + NADPH + H(+). It participates in carbohydrate biosynthesis; dTDP-L-rhamnose biosynthesis. The protein operates within bacterial outer membrane biogenesis; LPS O-antigen biosynthesis. Involved in the biosynthesis of the dTDP-L-rhamnose which is an important component of lipopolysaccharide (LPS). Catalyzes the reduction of dTDP-6-deoxy-L-lyxo-4-hexulose to yield dTDP-L-rhamnose. RmlD uses NADH and NADPH nearly equally well. This chain is dTDP-4-dehydrorhamnose reductase (rfbD), found in Salmonella typhimurium (strain LT2 / SGSC1412 / ATCC 700720).